The following is a 154-amino-acid chain: Cell cycle regulator of non-homologous end joining (154 aa).

Position 1 is an N-acetylmethionine (Met1). The KBM motif lies at 1 to 21 (METLKSENKKRVLPSWMTAPV). The tract at residues 77 to 144 (EEPTLVAPDK…RSPEEEEEDA (68 aa)) is disordered. The segment covering 95 to 105 (ASPHTSSPGSS) has biased composition (low complexity). Positions 144 to 154 (ALKYVREIFFS) match the XLM motif.

As to quaternary structure, interacts (via KBM motif) with XRCC5/Ku80 and XRCC6/Ku70 heterodimer. Interacts (via XLF motif) with TRIM28/KAP1, ATM, MRE11, NBN and RAD50. Interacts with splicing factor SF3B1. Interacts with ERCC6L2; this interaction is DNA independent.

Its subcellular location is the cytoplasm. The protein resides in the nucleus. It is found in the chromosome. Functionally, cell-cycle-specific regulator of classical non-homologous end joining (NHEJ) of DNA double-strand break (DSB) repair, which can act both as an activator or inhibitor of NHEJ, depending on the cell cycle phase. Acts as a regulator of DNA repair pathway choice by specifically inhibiting classical NHEJ during the S and G2 phases, thereby promoting error-free repair by homologous recombination during cell cycle phases when sister chromatids are present. Preferentially protects single-stranded overhangs at break sites by inhibiting classical NHEJ, thereby creating a local environment that favors homologous recombination. Acts via interaction with XRCC5/Ku80 and XRCC6/Ku70. In contrast, acts as an activator of NHEJ during G1 phase of the cell cycle: promotes classical NHEJ in G1 phase cells via multivalent interactions that increase the affinity of DNA damage response proteins for DSB-associated chromatin. Also involved in immunoglobulin V(D)J recombination. May act as a regulator of proteasome. In case of infection by a retrovirus, may regulate the proteasome during the uncoating phase of retrovirus. This Cricetulus griseus (Chinese hamster) protein is Cell cycle regulator of non-homologous end joining.